The sequence spans 164 residues: Putative pre-16S rRNA nuclease (164 aa).

Belongs to the YqgF nuclease family.

The protein resides in the cytoplasm. Its function is as follows. Could be a nuclease involved in processing of the 5'-end of pre-16S rRNA. This is Putative pre-16S rRNA nuclease from Synechococcus sp. (strain CC9902).